Here is a 595-residue protein sequence, read N- to C-terminus: Merlin (595 aa).

The residue at position 13 (Ser13) is a Phosphoserine. The region spanning 22–311 (FTVRIVTMDA…GNHDLFMRRR (290 aa)) is the FERM domain. Ser518 carries the phosphoserine; by PAK modification.

In terms of assembly, interacts with NHERF1, HGS and AGAP2. Interacts with SGSM3. Interacts (via FERM domain) with MPP1. Interacts with LAYN and WWC1. Interacts with the CUL4A-RBX1-DDB1-VprBP/DCAF1 E3 ubiquitin-protein ligase complex. The unphosphorylated form interacts (via FERM domain) with VPRBP/DCAF1. Interacts (via FERM domain) with NOP53; the interaction is direct. Interacts with SCHIP1; the interaction is direct. Phosphorylation of Ser-518 inhibits nuclear localization by disrupting the intramolecular association of the FERM domain with the C-terminal tail. Post-translationally, ubiquitinated by the CUL4A-RBX1-DDB1-DCAF1/VprBP E3 ubiquitin-protein ligase complex for ubiquitination and subsequent proteasome-dependent degradation. In terms of processing, phosphorylation of Ser-518 inhibits nuclear localization by disrupting the intramolecular association of the FERM domain with the C-terminal tail. The dephosphorylation of Ser-518 favors the interaction with NOP53.

It localises to the cell membrane. Its subcellular location is the cell projection. It is found in the cytoplasm. The protein resides in the cytoskeleton. The protein localises to the nucleus. Functionally, probable regulator of the Hippo/SWH (Sav/Wts/Hpo) signaling pathway, a signaling pathway that plays a pivotal role in tumor suppression by restricting proliferation and promoting apoptosis. Along with WWC1 can synergistically induce the phosphorylation of LATS1 and LATS2 and can probably function in the regulation of the Hippo/SWH (Sav/Wts/Hpo) signaling pathway. May act as a membrane stabilizing protein. May inhibit PI3 kinase by binding to AGAP2 and impairing its stimulating activity. Suppresses cell proliferation and tumorigenesis by inhibiting the CUL4A-RBX1-DDB1-VprBP/DCAF1 E3 ubiquitin-protein ligase complex. This chain is Merlin (NF2), found in Papio anubis (Olive baboon).